A 338-amino-acid polypeptide reads, in one-letter code: Secretory carrier-associated membrane protein 1 (338 aa).

Positions 1–64 are disordered; it reads MSDFDSNPFA…NVPNTQPAIM (64 aa). Ser2 is modified (N-acetylserine). A Phosphoserine modification is found at Ser2. Topologically, residues 2–155 are cytoplasmic; it reads SDFDSNPFAD…QKTVKLMYYL (154 aa). A Phosphothreonine modification is found at Thr45. Residues 156-176 traverse the membrane as a helical segment; the sequence is WMFHAVTLFLNIFGCLAWFCV. The Lumenal segment spans residues 177 to 181; it reads DSSRA. Residues 182 to 202 form a helical membrane-spanning segment; sequence VDFGLSILWFLLFTPCSFVCW. At 203–218 the chain is on the cytoplasmic side; sequence YRPLYGAFRSDSSFRF. Residues 219-239 traverse the membrane as a helical segment; it reads FVFFFVYICQFAVHVLQAAGF. Topologically, residues 240–261 are lumenal; that stretch reads HNWGNCGWISSLTGLNKNIPVG. The helical transmembrane segment at 262–282 threads the bilayer; it reads IMMIIIAALFTASAVISLVMF. Topologically, residues 283–338 are cytoplasmic; that stretch reads KKVHGLYRTTGASFEKAQQEFATGVMSNKTVQTAAANAASTAATSAAQNAFKGNQM.

Belongs to the SCAMP family. Interacts with SYNRG, ITSN1 and SLC9A7.

The protein resides in the golgi apparatus. It is found in the trans-Golgi network membrane. Its subcellular location is the recycling endosome membrane. Functionally, functions in post-Golgi recycling pathways. Acts as a recycling carrier to the cell surface. This chain is Secretory carrier-associated membrane protein 1 (Scamp1), found in Mus musculus (Mouse).